The sequence spans 189 residues: Large ribosomal subunit protein uL6 (189 aa).

It belongs to the universal ribosomal protein uL6 family. Part of the 50S ribosomal subunit.

This protein binds to the 23S rRNA, and is important in its secondary structure. It is located near the subunit interface in the base of the L7/L12 stalk, and near the tRNA binding site of the peptidyltransferase center. The chain is Large ribosomal subunit protein uL6 from Microcystis aeruginosa (strain NIES-843 / IAM M-2473).